We begin with the raw amino-acid sequence, 307 residues long: Ornithine carbamoyltransferase (307 aa).

Carbamoyl phosphate is bound by residues 51-54, glutamine 78, arginine 102, and 129-132; these read STRT and HPCQ. Residues asparagine 160, aspartate 220, and 224-225 contribute to the L-ornithine site; that span reads SM. Residues 260–261 and arginine 288 each bind carbamoyl phosphate; that span reads CL.

The protein belongs to the aspartate/ornithine carbamoyltransferase superfamily. OTCase family.

The protein localises to the cytoplasm. The catalysed reaction is carbamoyl phosphate + L-ornithine = L-citrulline + phosphate + H(+). The protein operates within amino-acid biosynthesis; L-arginine biosynthesis; L-arginine from L-ornithine and carbamoyl phosphate: step 1/3. Reversibly catalyzes the transfer of the carbamoyl group from carbamoyl phosphate (CP) to the N(epsilon) atom of ornithine (ORN) to produce L-citrulline. The chain is Ornithine carbamoyltransferase (argF) from Archaeoglobus fulgidus (strain ATCC 49558 / DSM 4304 / JCM 9628 / NBRC 100126 / VC-16).